Consider the following 354-residue polypeptide: GTPase Obg (354 aa).

In terms of domain architecture, Obg spans 1 to 159 (MKFLDQCKIY…LWVWLRLKLI (159 aa)). Residues 160–328 (ADVGLVGLPN…LLRAAFTQVR (169 aa)) form the OBG-type G domain. Residues 166 to 173 (GLPNAGKS), 191 to 195 (FTTLT), 213 to 216 (DIPG), 280 to 283 (NKVD), and 309 to 311 (SGV) contribute to the GTP site. Mg(2+)-binding residues include serine 173 and threonine 193. The segment at 333 to 354 (ETPAEAAIDEAPEEETPGGWQP) is disordered. The span at 339–348 (AIDEAPEEET) shows a compositional bias: acidic residues.

Belongs to the TRAFAC class OBG-HflX-like GTPase superfamily. OBG GTPase family. As to quaternary structure, monomer. It depends on Mg(2+) as a cofactor.

The protein localises to the cytoplasm. An essential GTPase which binds GTP, GDP and possibly (p)ppGpp with moderate affinity, with high nucleotide exchange rates and a fairly low GTP hydrolysis rate. Plays a role in control of the cell cycle, stress response, ribosome biogenesis and in those bacteria that undergo differentiation, in morphogenesis control. The protein is GTPase Obg of Caulobacter sp. (strain K31).